Consider the following 622-residue polypeptide: Phosphomethylpyrimidine synthase (622 aa).

The segment at 109 to 130 (EPISNNNNDRQSSDKQLSFTTN) is disordered. Substrate-binding positions include Asn-234, Met-263, Tyr-292, His-328, 348–350 (SRG), 389–392 (DGLR), and Glu-428. Zn(2+) is bound at residue His-432. Tyr-455 lines the substrate pocket. His-496 lines the Zn(2+) pocket. Residues Cys-576, Cys-579, and Cys-584 each contribute to the [4Fe-4S] cluster site.

The protein belongs to the ThiC family. In terms of assembly, homodimer. [4Fe-4S] cluster is required as a cofactor.

It catalyses the reaction 5-amino-1-(5-phospho-beta-D-ribosyl)imidazole + S-adenosyl-L-methionine = 4-amino-2-methyl-5-(phosphooxymethyl)pyrimidine + CO + 5'-deoxyadenosine + formate + L-methionine + 3 H(+). It functions in the pathway cofactor biosynthesis; thiamine diphosphate biosynthesis. Catalyzes the synthesis of the hydroxymethylpyrimidine phosphate (HMP-P) moiety of thiamine from aminoimidazole ribotide (AIR) in a radical S-adenosyl-L-methionine (SAM)-dependent reaction. This chain is Phosphomethylpyrimidine synthase, found in Baumannia cicadellinicola subsp. Homalodisca coagulata.